The following is a 145-amino-acid chain: Large-conductance mechanosensitive channel (145 aa).

The next 2 helical transmembrane spans lie at 16–36 (VVDL…VTSF) and 83–103 (GVFI…FMVI).

Belongs to the MscL family. As to quaternary structure, homopentamer.

It is found in the cell inner membrane. In terms of biological role, channel that opens in response to stretch forces in the membrane lipid bilayer. May participate in the regulation of osmotic pressure changes within the cell. This Geobacter metallireducens (strain ATCC 53774 / DSM 7210 / GS-15) protein is Large-conductance mechanosensitive channel.